The sequence spans 97 residues: uncharacterized protein (97 aa).

Positions 1-20 are enriched in basic and acidic residues; the sequence is MAKEQTDRTTLDLFAHERRP. The disordered stretch occupies residues 1-30; it reads MAKEQTDRTTLDLFAHERRPGRPKTNPLSR.

This is an uncharacterized protein from Escherichia coli O157:H7.